A 215-amino-acid chain; its full sequence is MFTGIVEETGTIQAIKKTGLSMALTIAASKVTSDVRLGDSIAVNGICLTVTGFSDNQFTVDVMPETVKATSLNGLSKGSKVNLERAMSANGRFGGHFVSGHVDGTAEITRIEKKSNAVYYDLKLSPELTKTLVLKGSITVDGVSSTIFGLSDESVTVSVIPHTISETIFRTKAVGSIVNIECDMIGKYLYRFLHKTEQTKSNQTITEAFFSENGF.

Lumazine-binding repeat units follow at residues 1-96 (MFTG…FGGH) and 97-193 (FVSG…YRFL). 2,4-dihydroxypteridine is bound by residues 4-6 (GIV), 47-49 (CLT), 61-66 (DVMPET), 100-102 (GHV), Lys-135, 144-146 (SST), and 158-163 (SVIPHT).

Homotrimer.

It carries out the reaction 2 6,7-dimethyl-8-(1-D-ribityl)lumazine + H(+) = 5-amino-6-(D-ribitylamino)uracil + riboflavin. It functions in the pathway cofactor biosynthesis; riboflavin biosynthesis; riboflavin from 2-hydroxy-3-oxobutyl phosphate and 5-amino-6-(D-ribitylamino)uracil: step 2/2. In terms of biological role, catalyzes the dismutation of two molecules of 6,7-dimethyl-8-ribityllumazine, resulting in the formation of riboflavin and 5-amino-6-(D-ribitylamino)uracil. This is Riboflavin synthase (ribE) from Bacillus amyloliquefaciens (Bacillus velezensis).